The chain runs to 149 residues: Protein E6 (149 aa).

Zinc fingers lie at residues 30 to 66 (CVYCKGQLTETEVLDFAFTDLTIVYRDDTPHGVCTKC) and 103 to 139 (CITCQRPLCPEEKQRHLDKKKRFHNIGGRWTGRCIAC). The short motif at 147–149 (TQV) is the PDZ-binding domain element.

It belongs to the papillomaviridae E6 protein family. Forms homodimers. Interacts with ubiquitin-protein ligase UBE3A/E6-AP and thus forms a complex with human TP53. Interacts with human NFX1 and MAGI3. Interacts with human IRF3; this interaction inhibits the establishment of antiviral state. Interacts with human TYK2; this interaction inhibits JAK-STAT activation by interferon alpha. Interacts with host DLG1; this interaction leads to the proteasomal degradation of DLG1.

It localises to the host cytoplasm. The protein localises to the host nucleus. Functionally, plays a major role in the induction and maintenance of cellular transformation. Acts mainly as an oncoprotein by stimulating the destruction of many host cell key regulatory proteins. E6 associates with host UBE3A/E6-AP ubiquitin-protein ligase, and inactivates tumor suppressors TP53 and TP73 by targeting them to the 26S proteasome for degradation. In turn, DNA damage and chromosomal instabilities increase and lead to cell proliferation and cancer development. The complex E6/E6AP targets several other substrates to degradation via the proteasome including host DLG1 or NFX1, a repressor of human telomerase reverse transcriptase (hTERT). The resulting increased expression of hTERT prevents the shortening of telomere length leading to cell immortalization. Other cellular targets including BAK1, Fas-associated death domain-containing protein (FADD) and procaspase 8, are degraded by E6/E6AP causing inhibition of apoptosis. E6 also inhibits immune response by interacting with host IRF3 and TYK2. These interactions prevent IRF3 transcriptional activities and inhibit TYK2-mediated JAK-STAT activation by interferon alpha resulting in inhibition of the interferon signaling pathway. The polypeptide is Protein E6 (Human papillomavirus 31).